Here is a 98-residue protein sequence, read N- to C-terminus: Large ribosomal subunit protein mL53 (98 aa).

The protein belongs to the mitochondrion-specific ribosomal protein mL53 family. In terms of assembly, component of the mitochondrial large ribosomal subunit (mt-LSU). Mature N.crassa 74S mitochondrial ribosomes consist of a small (37S) and a large (54S) subunit. The 37S small subunit contains a 16S ribosomal RNA (16S mt-rRNA) and 32 different proteins. The 54S large subunit contains a 23S rRNA (23S mt-rRNA) and 42 different proteins.

It is found in the mitochondrion. Component of the mitochondrial ribosome (mitoribosome), a dedicated translation machinery responsible for the synthesis of mitochondrial genome-encoded proteins, including at least some of the essential transmembrane subunits of the mitochondrial respiratory chain. The mitoribosomes are attached to the mitochondrial inner membrane and translation products are cotranslationally integrated into the membrane. This chain is Large ribosomal subunit protein mL53 (mrpl44), found in Neurospora crassa (strain ATCC 24698 / 74-OR23-1A / CBS 708.71 / DSM 1257 / FGSC 987).